Here is a 252-residue protein sequence, read N- to C-terminus: Triosephosphate isomerase (252 aa).

Position 10-12 (10-12 (NWK)) interacts with substrate. The active-site Electrophile is His96. Residue Glu168 is the Proton acceptor of the active site. Substrate is bound by residues Gly174, Ser214, and 235–236 (GG).

The protein belongs to the triosephosphate isomerase family. Homodimer.

It is found in the cytoplasm. It carries out the reaction D-glyceraldehyde 3-phosphate = dihydroxyacetone phosphate. Its pathway is carbohydrate biosynthesis; gluconeogenesis. It participates in carbohydrate degradation; glycolysis; D-glyceraldehyde 3-phosphate from glycerone phosphate: step 1/1. Its function is as follows. Involved in the gluconeogenesis. Catalyzes stereospecifically the conversion of dihydroxyacetone phosphate (DHAP) to D-glyceraldehyde-3-phosphate (G3P). This chain is Triosephosphate isomerase, found in Lactococcus lactis subsp. lactis (strain IL1403) (Streptococcus lactis).